The chain runs to 1100 residues: MYKPVDPKVDFAKQEEDVLKFWEKNDVFKKSVSSRDGRDNYIFFDGPPFATGLPHFGHFVPGTIKDIIPRYKTMKGFRVERRFGWDCHGLPVENLIEKELGLNSKTDIEKYGIDKFNEACRASVLRYVKEWKQTITRLGRWVDFENDYKTMEPAFMESIWWVMKSLWEKGLLYEGYYILPYCPRCSTVLSNHELNLGGYKDVHDPAITVRFKTLSPVKTSPAGKAFEGKNALPSDTYLLAWTTTPWTLPSNLGLAVGADIDYALIEYDGAHYIMAVPRLEAYFAKSGKEEAKEYKLIWTKKGAELEGLRYEPLFPYFKNLAADENGKNAEAGQGAFRVLIGDFVTTEDGTGIVHTAPGFGEDDNRIFKDTGVPTVCPVDAECKFTHEVSDYQGLFVKDADKQIMERLKTEGKLFKKAQILHSYPHCWRCSSPLIYRAVASWFVSVTKIKDKLLNANSKINWQPDHIKTGRFGKWLEGARDWAISRNRYWGNPIPIWKCPDCGETICVGSREELKELSGVFPEDMHKHFVDKISIPCKKCGGTMKRVSEVLDCWFESGSMPYAQQHYPFENKEHFEKNFPADFISEGLDQTRGWFYTLTILAAALFDEPAFKNCIVNGLVLAEDGKKMSKSLRNYTDPNEVIKQFGADALRLFLMNSNVVKADDLKYSDEGVRDVLKGILIPFWNSYSFYITYANIDGVKPPHNAKVDGKDEGVEEFLAKLNNPLDLWILSVTEKLVADVTEALDKYDLSQAIPPMVEYIDLLNNWYIRRSRRRFWKSENDGDKSQAYETLYRALKKFSLVAAPVVPFITESIWQNLRTESDALSIHLADYPDYNEKIRNSELEFKMKTVQKAVSMGRALRYQFNLKIRQPLKAVEIVTLNPEEKRVLLEMEESIIEELNVKEVIFHEKEDELVEYSAKANFKVLGKELGPLMKKAAAIIEQMNSSEIQNIMEGATLSIDIEGKSVEITADKIVINRIEKASLKIVNEGTLTVGLNTELTEELLMEGYIRDLVRGIQTLRKECGLDVTDRIKLYLSASQKNADNKELEKAFELFKDYVCDETLTVQSSWLKTGELTKLGSIKTSLVEAGDYEWEIGIEKNN.

The 'HIGH' region signature appears at 48 to 58 (PFATGLPHFGH). A 'KMSKS' region motif is present at residues 626 to 630 (KMSKS). Lys-629 provides a ligand contact to ATP.

It belongs to the class-I aminoacyl-tRNA synthetase family. IleS type 2 subfamily. In terms of assembly, monomer. Zn(2+) serves as cofactor.

It is found in the cytoplasm. The enzyme catalyses tRNA(Ile) + L-isoleucine + ATP = L-isoleucyl-tRNA(Ile) + AMP + diphosphate. Catalyzes the attachment of isoleucine to tRNA(Ile). As IleRS can inadvertently accommodate and process structurally similar amino acids such as valine, to avoid such errors it has two additional distinct tRNA(Ile)-dependent editing activities. One activity is designated as 'pretransfer' editing and involves the hydrolysis of activated Val-AMP. The other activity is designated 'posttransfer' editing and involves deacylation of mischarged Val-tRNA(Ile). The chain is Isoleucine--tRNA ligase from Treponema denticola (strain ATCC 35405 / DSM 14222 / CIP 103919 / JCM 8153 / KCTC 15104).